A 246-amino-acid chain; its full sequence is U2 small nuclear ribonucleoprotein A' (246 aa).

LRR repeat units lie at residues 19-40 (RDRE…GVTR), 42-63 (QNDA…PLLQ), 64-85 (QLKT…IGHS), and 88-109 (ALHS…VHLS). An LRRCT domain is found at 122–160 (TPASREAQYREFVIWKLPQVRVLDYQRIKDKERARAKDL).

This sequence belongs to the U2 small nuclear ribonucleoprotein A family. As to quaternary structure, associated with the spliceosome.

The protein resides in the nucleus. Involved in pre-mRNA splicing. The sequence is that of U2 small nuclear ribonucleoprotein A' (LEA1) from Mycosarcoma maydis (Corn smut fungus).